The chain runs to 207 residues: Chloramphenicol acetyltransferase (207 aa).

His186 serves as the catalytic Proton acceptor.

This sequence belongs to the chloramphenicol acetyltransferase family. As to quaternary structure, homotrimer.

The catalysed reaction is chloramphenicol + acetyl-CoA = chloramphenicol 3-acetate + CoA. Functionally, this enzyme is an effector of chloramphenicol resistance in bacteria. The chain is Chloramphenicol acetyltransferase from Campylobacter coli.